The sequence spans 355 residues: Peptide chain release factor 1 (355 aa).

An N5-methylglutamine modification is found at Q233.

Belongs to the prokaryotic/mitochondrial release factor family. Post-translationally, methylated by PrmC. Methylation increases the termination efficiency of RF1.

It localises to the cytoplasm. Functionally, peptide chain release factor 1 directs the termination of translation in response to the peptide chain termination codons UAG and UAA. In Clostridium tetani (strain Massachusetts / E88), this protein is Peptide chain release factor 1.